The sequence spans 21 residues: Cupiennin-6d (21 aa).

Serine 21 is modified (serine amide).

As to expression, expressed by the venom gland.

The protein localises to the secreted. This is Cupiennin-6d from Cupiennius salei (American wandering spider).